Here is a 403-residue protein sequence, read N- to C-terminus: MAAAAGEEVEAARWAEAEDERKEGLRRRRRYGLVEYRALPGYMRDNEYILRHYRCEWPLPQVLLSAFSIHNETLNVWTHLIGFFIFLVLTIYTATQVPNVVDLQSLQHLPDVLRNADLHKIQTELVACLPSLPHLSDLQKLKDELKSSWNSIEVLPSLSRWHLLELLSSCLPHRFTHSNETSLSVLQSMKEDIANMIAPQLIRPIPRWPFYAFLGGAMFCLLASSTCHLLSCHSRRLAYIMLRLDYAGIAALIATSFYPPVYYSFMCYPFFCNLYLSCITILGVATIAFSLLPVFQNPEFRTIRACLFFGMGASGVIPVIHKLILFWHQPEALHTTAYEVLMGLFYGIGALVYATRVPERWMPGKFDIAGHSHQLFHVLVVAGAYTHYHSGLVYLKWRDVQGC.

Residues 1-73 (MAAAAGEEVE…LSAFSIHNET (73 aa)) lie on the Cytoplasmic side of the membrane. The chain crosses the membrane as a helical span at residues 74–94 (LNVWTHLIGFFIFLVLTIYTA). Residues 95 to 209 (TQVPNVVDLQ…QLIRPIPRWP (115 aa)) lie on the Extracellular side of the membrane. Residues 210–230 (FYAFLGGAMFCLLASSTCHLL) traverse the membrane as a helical segment. The Cytoplasmic portion of the chain corresponds to 231-246 (SCHSRRLAYIMLRLDY). A helical membrane pass occupies residues 247 to 267 (AGIAALIATSFYPPVYYSFMC). The Extracellular portion of the chain corresponds to 268-274 (YPFFCNL). The chain crosses the membrane as a helical span at residues 275 to 295 (YLSCITILGVATIAFSLLPVF). Residues 296–306 (QNPEFRTIRAC) are Cytoplasmic-facing. A helical membrane pass occupies residues 307–327 (LFFGMGASGVIPVIHKLILFW). The Extracellular portion of the chain corresponds to 328 to 331 (HQPE). Residues 332 to 352 (ALHTTAYEVLMGLFYGIGALV) form a helical membrane-spanning segment. At 353 to 374 (YATRVPERWMPGKFDIAGHSHQ) the chain is on the cytoplasmic side. Residues 375–395 (LFHVLVVAGAYTHYHSGLVYL) traverse the membrane as a helical segment. At 396-403 (KWRDVQGC) the chain is on the extracellular side.

This sequence belongs to the ADIPOR family.

Its subcellular location is the membrane. In terms of biological role, may play a role in abiotic stress response. This is Heptahelical transmembrane protein ADIPOR3 (ADIPOR3) from Oryza sativa subsp. japonica (Rice).